The chain runs to 469 residues: tRNA modification GTPase MnmE (469 aa).

Arg-26, Glu-88, and Arg-127 together coordinate (6S)-5-formyl-5,6,7,8-tetrahydrofolate. Residues 222–390 (GLKVAIVGRP…LEDAILHLVQ (169 aa)) form the TrmE-type G domain. Asn-232 is a K(+) binding site. GTP contacts are provided by residues 232–237 (NVGKSS), 251–257 (TDLPGTT), 276–279 (DTAG), and 344–347 (NKAD). Ser-236 provides a ligand contact to Mg(2+). Positions 251, 253, and 256 each coordinate K(+). Position 257 (Thr-257) interacts with Mg(2+). Lys-469 serves as a coordination point for (6S)-5-formyl-5,6,7,8-tetrahydrofolate.

This sequence belongs to the TRAFAC class TrmE-Era-EngA-EngB-Septin-like GTPase superfamily. TrmE GTPase family. In terms of assembly, homodimer. Heterotetramer of two MnmE and two MnmG subunits. K(+) is required as a cofactor.

The protein resides in the cytoplasm. Its function is as follows. Exhibits a very high intrinsic GTPase hydrolysis rate. Involved in the addition of a carboxymethylaminomethyl (cmnm) group at the wobble position (U34) of certain tRNAs, forming tRNA-cmnm(5)s(2)U34. The polypeptide is tRNA modification GTPase MnmE (Synechococcus elongatus).